A 604-amino-acid chain; its full sequence is MAGINQKNIRNFCIIAHIDHGKSTLADRIIEKTGLLTSREMQEQILDNMDLERERGITIKAQTVRTVYKASDGQEYIFNLIDTPGHVDFNYEVSRALAACDGAILVVDAAQGIEAQTLANVYLALDHDLDVFPVINKIDLPSAEPERVIEEIEDIIGIEAQDAPLISAKNGINIEEVLEQIVTKIPAPSGDASAPLSALIFDSLYDAYKGVIIFVRIKEGTVKKGTKIRMMATGAVEEVVEVGYFGAGRFIPCDELTAGMVGYITASIKNVRDTRVGDTVTDNDRPCEQPLPGYKKVNPMVYCGLYPADGAKYQDLRDALEKLQLNDAALQFEPETSIALGFGFRCGFLGLLHLEIIQERLEREYNLDLVTTAPGVIYKVHKTNGDVIDLTNPSNMPDPSEIDYMEEPMVSAEIMVTTEFVGPIMKLCQERRGIYNGMEYIEQTRALLKYDLPLNEIIYDFFDALKSRSRGYASFDYEMKGYERSKLVKLDILINKEEVDALSFIVFAGNAEERGRKMCEKLKEEIPRQQFEIPIQAAIGSKVIARETVKALRKDVLAKCYGGDISRKKKLLEKQKEGKKRMRQIGNVEIPQKAFMSVLKLDDE.

Positions 7–189 (KNIRNFCIIA…QIVTKIPAPS (183 aa)) constitute a tr-type G domain. Residues 19–24 (DHGKST) and 136–139 (NKID) each bind GTP.

The protein belongs to the TRAFAC class translation factor GTPase superfamily. Classic translation factor GTPase family. LepA subfamily.

The protein resides in the cell membrane. It carries out the reaction GTP + H2O = GDP + phosphate + H(+). Required for accurate and efficient protein synthesis under certain stress conditions. May act as a fidelity factor of the translation reaction, by catalyzing a one-codon backward translocation of tRNAs on improperly translocated ribosomes. Back-translocation proceeds from a post-translocation (POST) complex to a pre-translocation (PRE) complex, thus giving elongation factor G a second chance to translocate the tRNAs correctly. Binds to ribosomes in a GTP-dependent manner. The chain is Elongation factor 4 from Lachnospira eligens (strain ATCC 27750 / DSM 3376 / VPI C15-48 / C15-B4) (Eubacterium eligens).